Here is a 593-residue protein sequence, read N- to C-terminus: Monoterpene synthase 7, chloroplastic (593 aa).

A chloroplast-targeting transit peptide spans 1–39 (MSVSLSFAASATFGFRGGLGGFSRPAAAIKQWRCLPRIQ). Residues Asp-348, Asp-352, Asp-491, and Glu-499 each coordinate Mg(2+). Residues 348-352 (DDVYD) carry the DDXXD motif motif.

This sequence belongs to the terpene synthase family. Tpsa subfamily. Mg(2+) is required as a cofactor. It depends on Mn(2+) as a cofactor. In terms of tissue distribution, highly expressed in flowers, petals and sepals, but almost undetectable in vegetative organs.

Its subcellular location is the plastid. The protein resides in the chloroplast. The catalysed reaction is (2E)-geranyl diphosphate = sabinene + diphosphate. It catalyses the reaction (2E)-geranyl diphosphate = terpinolene + diphosphate. The enzyme catalyses (2E)-geranyl diphosphate = alpha-pinene + diphosphate. It carries out the reaction (2E)-geranyl diphosphate = beta-pinene + diphosphate. The catalysed reaction is (2E)-geranyl diphosphate = beta-myrcene + diphosphate. It catalyses the reaction (2E)-geranyl diphosphate = alpha-terpinene + diphosphate. The enzyme catalyses (2E)-geranyl diphosphate = beta-phellandrene + diphosphate. It carries out the reaction (2E)-geranyl diphosphate = gamma-terpinene + diphosphate. Its pathway is secondary metabolite biosynthesis; terpenoid biosynthesis. Functionally, monoterpene synthase involved in the biosynthesis of volatile compounds present in floral scent. Mediates the conversion of (2E)-geranyl diphosphate (GPP) into sabinene and sub-products such as alpha-thujene, alpha-pinene, beta-pinene, myrcene, alpha-phellandrene, alpha-terpinene, beta-phellandrene, gamma-terpinene and terpinolene. Unable to use farnesyl diphosphate (FPP) as substrate. This is Monoterpene synthase 7, chloroplastic from Hedychium coronarium (White butterfly ginger-lily).